We begin with the raw amino-acid sequence, 356 residues long: DNA polymerase IV (356 aa).

Residues 1–188 form the UmuC domain; the sequence is MDTSRKIIHI…IPVTKFYGVG (188 aa). Aspartate 11 and aspartate 106 together coordinate Mg(2+). Glutamate 107 is an active-site residue.

This sequence belongs to the DNA polymerase type-Y family. As to quaternary structure, monomer. Mg(2+) serves as cofactor.

It localises to the cytoplasm. The enzyme catalyses DNA(n) + a 2'-deoxyribonucleoside 5'-triphosphate = DNA(n+1) + diphosphate. Its function is as follows. Poorly processive, error-prone DNA polymerase involved in untargeted mutagenesis. Copies undamaged DNA at stalled replication forks, which arise in vivo from mismatched or misaligned primer ends. These misaligned primers can be extended by PolIV. Exhibits no 3'-5' exonuclease (proofreading) activity. May be involved in translesional synthesis, in conjunction with the beta clamp from PolIII. The sequence is that of DNA polymerase IV from Listeria innocua serovar 6a (strain ATCC BAA-680 / CLIP 11262).